Here is a 67-residue protein sequence, read N- to C-terminus: Conotoxin Cl14c (67 aa).

The N-terminal stretch at 1–20 (MNVTVMFLVLLLLTMPLTDG) is a signal peptide. The propeptide occupies 21–48 (FNIRATNGGELFGPVQRDAGNVLDHGFQ).

Belongs to the conotoxin L superfamily. Contains 2 disulfide bonds. Expressed by the venom duct.

Its subcellular location is the secreted. This is Conotoxin Cl14c from Californiconus californicus (California cone).